Here is a 208-residue protein sequence, read N- to C-terminus: Troponin I, cardiac muscle (208 aa).

3 disordered regions span residues 1-37 (MAEEEEPKPPPLRRKSSANYRGYAVEPHAKRQSKISA), 54-74 (DLEREEQERAGEKQRHLGELC), and 168-208 (VRKD…GGQS). Ala2 is modified (N-acetylalanine). An involved in binding TNC region spans residues 28–73 (HAKRQSKISASRKLQLKTLLLQRAKRDLEREEQERAGEKQRHLGEL). Basic and acidic residues-rich tracts occupy residues 54-71 (DLEREEQERAGEKQRHLG) and 168-187 (VRKDEAEKESREVGDWRKNV).

Belongs to the troponin I family. As to quaternary structure, binds to actin and tropomyosin.

Troponin I is the inhibitory subunit of troponin, the thin filament regulatory complex which confers calcium-sensitivity to striated muscle actomyosin ATPase activity. The polypeptide is Troponin I, cardiac muscle (TNNI3) (Coturnix japonica (Japanese quail)).